The chain runs to 279 residues: Putative E3 ubiquitin-protein ligase C36B7.05c (279 aa).

An FYVE-type zinc finger spans residues 27-122 (DDESAQCNNC…VCVNCRQQLS (96 aa)). Residues cysteine 33, cysteine 36, cysteine 49, cysteine 52, cysteine 57, cysteine 60, cysteine 114, and cysteine 117 each coordinate Zn(2+). Phosphoserine is present on serine 200. The segment at 230–273 (CIICFEEFAAGDRVARIEYCLCIFHLKCYRDWLSTGAAGCPVHA) adopts an RING-type; atypical zinc-finger fold.

It localises to the cytoplasm. The protein resides in the nucleus. Its subcellular location is the endosome membrane. The protein localises to the vacuole membrane. It catalyses the reaction S-ubiquitinyl-[E2 ubiquitin-conjugating enzyme]-L-cysteine + [acceptor protein]-L-lysine = [E2 ubiquitin-conjugating enzyme]-L-cysteine + N(6)-ubiquitinyl-[acceptor protein]-L-lysine.. Its pathway is protein modification; protein ubiquitination. In terms of biological role, functions as an E3 ubiquitin-protein ligase. Binds phospholipid vesicles containing phosphatidylinositol 3-phosphate. This is Putative E3 ubiquitin-protein ligase C36B7.05c from Schizosaccharomyces pombe (strain 972 / ATCC 24843) (Fission yeast).